The chain runs to 39 residues: Large ribosomal subunit protein bL36 (39 aa).

The protein belongs to the bacterial ribosomal protein bL36 family.

This Limosilactobacillus reuteri (strain DSM 20016) (Lactobacillus reuteri) protein is Large ribosomal subunit protein bL36.